The following is a 451-amino-acid chain: 3-phosphoshikimate 1-carboxyvinyltransferase (451 aa).

Positions 28, 29, and 33 each coordinate 3-phosphoshikimate. A phosphoenolpyruvate-binding site is contributed by lysine 28. Phosphoenolpyruvate-binding residues include glycine 105 and arginine 133. 3-phosphoshikimate-binding residues include serine 178, glutamine 180, aspartate 331, and lysine 358. Glutamine 180 lines the phosphoenolpyruvate pocket. Aspartate 331 (proton acceptor) is an active-site residue. 2 residues coordinate phosphoenolpyruvate: arginine 362 and arginine 406.

Belongs to the EPSP synthase family. In terms of assembly, monomer.

It is found in the cytoplasm. It carries out the reaction 3-phosphoshikimate + phosphoenolpyruvate = 5-O-(1-carboxyvinyl)-3-phosphoshikimate + phosphate. Its pathway is metabolic intermediate biosynthesis; chorismate biosynthesis; chorismate from D-erythrose 4-phosphate and phosphoenolpyruvate: step 6/7. In terms of biological role, catalyzes the transfer of the enolpyruvyl moiety of phosphoenolpyruvate (PEP) to the 5-hydroxyl of shikimate-3-phosphate (S3P) to produce enolpyruvyl shikimate-3-phosphate and inorganic phosphate. The polypeptide is 3-phosphoshikimate 1-carboxyvinyltransferase (Rhodospirillum rubrum (strain ATCC 11170 / ATH 1.1.1 / DSM 467 / LMG 4362 / NCIMB 8255 / S1)).